We begin with the raw amino-acid sequence, 252 residues long: Diphthine synthase (252 aa).

S-adenosyl-L-methionine contacts are provided by residues L9, D85, V88, 113-114, L165, A204, and H229; that span reads SI.

The protein belongs to the diphthine synthase family. In terms of assembly, homodimer.

The catalysed reaction is 2-[(3S)-amino-3-carboxypropyl]-L-histidyl-[translation elongation factor 2] + 3 S-adenosyl-L-methionine = diphthine-[translation elongation factor 2] + 3 S-adenosyl-L-homocysteine + 3 H(+). It functions in the pathway protein modification; peptidyl-diphthamide biosynthesis. Its function is as follows. S-adenosyl-L-methionine-dependent methyltransferase that catalyzes the trimethylation of the amino group of the modified target histidine residue in translation elongation factor 2 (EF-2), to form an intermediate called diphthine. The three successive methylation reactions represent the second step of diphthamide biosynthesis. This chain is Diphthine synthase, found in Methanocorpusculum labreanum (strain ATCC 43576 / DSM 4855 / Z).